Here is a 324-residue protein sequence, read N- to C-terminus: N-acetyl-gamma-glutamyl-phosphate reductase (324 aa).

Residue Cys-131 is part of the active site.

The protein belongs to the NAGSA dehydrogenase family. Type 1 subfamily.

Its subcellular location is the cytoplasm. It carries out the reaction N-acetyl-L-glutamate 5-semialdehyde + phosphate + NADP(+) = N-acetyl-L-glutamyl 5-phosphate + NADPH + H(+). Its pathway is amino-acid biosynthesis; L-arginine biosynthesis; N(2)-acetyl-L-ornithine from L-glutamate: step 3/4. Catalyzes the NADPH-dependent reduction of N-acetyl-5-glutamyl phosphate to yield N-acetyl-L-glutamate 5-semialdehyde. The sequence is that of N-acetyl-gamma-glutamyl-phosphate reductase from Bradyrhizobium sp. (strain ORS 278).